Reading from the N-terminus, the 263-residue chain is Receptor-transporting protein 1 (263 aa).

Residues 1–238 (MRIFRPWRLR…ETGSGWNFCS (238 aa)) are Cytoplasmic-facing. Residues 88-197 (ASGRFHCSWC…GEFCEACQEG (110 aa)) form a 3CxxC-type zinc finger. The chain crosses the membrane as a helical span at residues 239–259 (IPWCLFWATVLLLIIYLQLSF). At 260 to 263 (RSSV) the chain is on the extracellular side.

The protein belongs to the TMEM7 family. Interacts with olfactory receptors.

It localises to the cell membrane. In terms of biological role, specifically promotes functional cell surface expression of olfactory receptors, but not of other GPCRs. In Macaca fascicularis (Crab-eating macaque), this protein is Receptor-transporting protein 1 (RTP1).